The following is a 309-amino-acid chain: Porphobilinogen deaminase (309 aa).

At Cys-241 the chain carries S-(dipyrrolylmethanemethyl)cysteine.

The protein belongs to the HMBS family. Monomer. It depends on dipyrromethane as a cofactor.

It catalyses the reaction 4 porphobilinogen + H2O = hydroxymethylbilane + 4 NH4(+). The protein operates within porphyrin-containing compound metabolism; protoporphyrin-IX biosynthesis; coproporphyrinogen-III from 5-aminolevulinate: step 2/4. Its function is as follows. Tetrapolymerization of the monopyrrole PBG into the hydroxymethylbilane pre-uroporphyrinogen in several discrete steps. The protein is Porphobilinogen deaminase of Desulforudis audaxviator (strain MP104C).